A 187-amino-acid polypeptide reads, in one-letter code: Putative glutathione-dependent formaldehyde-activating enzyme (187 aa).

Residues 20–166 (FPGGKLYCHC…FESVGLKTYD (147 aa)) form the CENP-V/GFA domain. Residues C27, C29, C48, C50, C53, C95, and C98 each coordinate Zn(2+).

It belongs to the Gfa family. It depends on Zn(2+) as a cofactor.

It carries out the reaction S-(hydroxymethyl)glutathione = glutathione + formaldehyde. Its pathway is one-carbon metabolism; formaldehyde degradation; formate from formaldehyde (glutathione route): step 1/3. Its function is as follows. Catalyzes the condensation of formaldehyde and glutathione to S-hydroxymethylglutathione. The chain is Putative glutathione-dependent formaldehyde-activating enzyme from Talaromyces marneffei (strain ATCC 18224 / CBS 334.59 / QM 7333) (Penicillium marneffei).